A 233-amino-acid chain; its full sequence is MAGVRSLRCSRGCAGGCECGDKGKCSDSSLLGKRLSEDSSRHQLLQKWASMWSSMSEDASVADMERAQLEEEAAAAEERPLVFLCSGCRRPLGDSLSWVASQEDTNCILLRCVSCNVSVDKEQKLSKREKENGCVLETLCCAGCSLNLGYVYRCTPKNLDYKRDLFCLSVEAIESYVLGSSEKQIVSEDKELFNLESRVEIEKSLTQMEDVLKALQMKLWEAESKLSFATCKS.

3 positions are modified to phosphoserine: S36, S39, and S40. Residues 80–178 form the Mis18 domain; it reads PLVFLCSGCR…SVEAIESYVL (99 aa). C85, C88, C141, and C144 together coordinate Zn(2+). Residue K162 forms a Glycyl lysine isopeptide (Lys-Gly) (interchain with G-Cter in SUMO2) linkage. S233 carries the phosphoserine modification.

It belongs to the mis18 family. As to quaternary structure, homodimer, and heterodimer with OIP5/MIS18B. Identified in a complex containing MIS18A, OIP5/MIS18B, MIS18BP1, RBBP7 and RBBP4. Detected in testis.

The protein resides in the nucleus. Its subcellular location is the chromosome. It is found in the centromere. Functionally, required for recruitment of CENPA to centromeres and normal chromosome segregation during mitosis. The sequence is that of Protein Mis18-alpha (MIS18A) from Homo sapiens (Human).